The chain runs to 538 residues: Carotenoid 9,10(9',10')-cleavage dioxygenase 1 (538 aa).

Fe cation contacts are provided by H222, H270, H336, and H523.

This sequence belongs to the carotenoid oxygenase family. Homodimer. Fe(2+) serves as cofactor. High expression in flowers and siliques. Also detected in stems, leaves and roots.

The protein resides in the cytoplasm. The enzyme catalyses all-trans-zeaxanthin + 2 O2 = 4,9-dimethyldodeca-2,4,6,8,10-pentaenedial + 2 (3R)-hydroxy-beta-ionone. Cleaves a variety of carotenoids symmetrically at both the 9-10 and 9'-10' double bonds. Active on beta,beta-carotene, lutein, zeaxanthin, all-trans-violaxanthin, 9-cis-violaxanthin and 9'-cis-neoxanthin. With most substrates, the carotenoid is symmetrically cleaved. Probably not involved in abscisic acid biosynthesis. This Arabidopsis thaliana (Mouse-ear cress) protein is Carotenoid 9,10(9',10')-cleavage dioxygenase 1 (CCD1).